Reading from the N-terminus, the 467-residue chain is ATP-dependent protease ATPase subunit HslU (467 aa).

Residues isoleucine 20, 62 to 67, aspartate 280, glutamate 345, and arginine 417 each bind ATP; that span reads GVGKTE.

This sequence belongs to the ClpX chaperone family. HslU subfamily. As to quaternary structure, a double ring-shaped homohexamer of HslV is capped on each side by a ring-shaped HslU homohexamer. The assembly of the HslU/HslV complex is dependent on binding of ATP.

It localises to the cytoplasm. ATPase subunit of a proteasome-like degradation complex; this subunit has chaperone activity. The binding of ATP and its subsequent hydrolysis by HslU are essential for unfolding of protein substrates subsequently hydrolyzed by HslV. HslU recognizes the N-terminal part of its protein substrates and unfolds these before they are guided to HslV for hydrolysis. The chain is ATP-dependent protease ATPase subunit HslU from Ligilactobacillus salivarius (strain UCC118) (Lactobacillus salivarius).